Reading from the N-terminus, the 1846-residue chain is C2 domain-containing protein (1846 aa).

Residues 16-36 form a disordered region; it reads NTEKEEGKNAEINENNDPNTQ. The span at 17–26 shows a compositional bias: basic and acidic residues; sequence TEKEEGKNAE. Residues 27-36 are compositionally biased toward polar residues; the sequence is INENNDPNTQ. The C2 domain maps to 497–623; sequence VPRYRQRGDI…FNEKNVRRNK (127 aa). Basic and acidic residues-rich tracts occupy residues 1193–1211 and 1230–1243; these read DEHTDIDTEKKKHEKDNYK and KDDHHHITDKKVSK. Disordered stretches follow at residues 1193–1244, 1346–1370, 1456–1635, 1652–1692, and 1827–1846; these read DEHT…VSKS, KYTINEKRDDIKTKKKRSKEKKKQD, KNER…KKRV, NEKM…NNER, and EEPSSKKSPQKKKIVIVRKN. Positions 1349 to 1506 form a coiled coil; the sequence is INEKRDDIKT…DENMKEEQKM (158 aa). Composition is skewed to basic and acidic residues over residues 1456–1474, 1481–1629, 1652–1663, and 1670–1692; these read KNERNKMEKSYKRMIQKDK, ESRD…MRRE, NEKMKKKEEKEE, and KEDIEDKYKIGKEASLDENNNER. The segment covering 1834 to 1846 has biased composition (basic residues); it reads SPQKKKIVIVRKN.

It is found in the membrane. In terms of biological role, binds calcium and phospholipids. Regulates microneme secretion. The chain is C2 domain-containing protein from Plasmodium falciparum (isolate 3D7).